Consider the following 183-residue polypeptide: Holliday junction branch migration complex subunit RuvA (183 aa).

Residues 1–64 (MVVGIEGIIT…EDSNKFYGFL (64 aa)) form a domain I region. A domain II region spans residues 65 to 139 (DKDEQKMFEM…DTRTKLENVS (75 aa)). A region of interest (flexible linker) is located at residue Ser-139. The tract at residues 139–183 (SDDKSEALAALLTLGFKQEKIISVLASAQATGTSELIKEALKKLR) is domain III.

Belongs to the RuvA family. In terms of assembly, homotetramer. Forms an RuvA(8)-RuvB(12)-Holliday junction (HJ) complex. HJ DNA is sandwiched between 2 RuvA tetramers; dsDNA enters through RuvA and exits via RuvB. An RuvB hexamer assembles on each DNA strand where it exits the tetramer. Each RuvB hexamer is contacted by two RuvA subunits (via domain III) on 2 adjacent RuvB subunits; this complex drives branch migration. In the full resolvosome a probable DNA-RuvA(4)-RuvB(12)-RuvC(2) complex forms which resolves the HJ.

It localises to the cytoplasm. Functionally, the RuvA-RuvB-RuvC complex processes Holliday junction (HJ) DNA during genetic recombination and DNA repair, while the RuvA-RuvB complex plays an important role in the rescue of blocked DNA replication forks via replication fork reversal (RFR). RuvA specifically binds to HJ cruciform DNA, conferring on it an open structure. The RuvB hexamer acts as an ATP-dependent pump, pulling dsDNA into and through the RuvAB complex. HJ branch migration allows RuvC to scan DNA until it finds its consensus sequence, where it cleaves and resolves the cruciform DNA. The chain is Holliday junction branch migration complex subunit RuvA from Campylobacter jejuni subsp. doylei (strain ATCC BAA-1458 / RM4099 / 269.97).